Here is a 148-residue protein sequence, read N- to C-terminus: Phosphopantetheine adenylyltransferase (148 aa).

This sequence belongs to the eukaryotic CoaD family.

It is found in the cytoplasm. The enzyme catalyses (R)-4'-phosphopantetheine + ATP + H(+) = 3'-dephospho-CoA + diphosphate. Its pathway is cofactor biosynthesis; coenzyme A biosynthesis. Its function is as follows. Reversibly transfers an adenylyl group from ATP to 4'-phosphopantetheine, yielding dephospho-CoA (dPCoA) and pyrophosphate. The chain is Phosphopantetheine adenylyltransferase from Archaeoglobus fulgidus (strain ATCC 49558 / DSM 4304 / JCM 9628 / NBRC 100126 / VC-16).